The primary structure comprises 561 residues: DNA ligase B (561 aa).

Lys125 (N6-AMP-lysine intermediate) is an active-site residue.

The protein belongs to the NAD-dependent DNA ligase family. LigB subfamily.

The enzyme catalyses NAD(+) + (deoxyribonucleotide)n-3'-hydroxyl + 5'-phospho-(deoxyribonucleotide)m = (deoxyribonucleotide)n+m + AMP + beta-nicotinamide D-nucleotide.. Functionally, catalyzes the formation of phosphodiester linkages between 5'-phosphoryl and 3'-hydroxyl groups in double-stranded DNA using NAD as a coenzyme and as the energy source for the reaction. In Salmonella newport (strain SL254), this protein is DNA ligase B.